A 567-amino-acid chain; its full sequence is Phosphoglucomutase-like protein 5 (567 aa).

A disordered region spans residues 1–26; that stretch reads MEGSPIPVLTVPTAPYEDQRPTGGGG. Thr120 carries the post-translational modification Phosphothreonine. Ser122 carries the post-translational modification Phosphoserine.

It belongs to the phosphohexose mutase family. As to quaternary structure, interacts with DMD/dystrophin; the interaction is direct. Interacts with UTRN/utrophin.

It localises to the cell junction. The protein resides in the adherens junction. It is found in the cytoplasm. The protein localises to the cytoskeleton. Its subcellular location is the cell membrane. It localises to the sarcolemma. Functionally, component of adherens-type cell-cell and cell-matrix junctions. Has no phosphoglucomutase activity in vitro. The protein is Phosphoglucomutase-like protein 5 of Mus musculus (Mouse).